We begin with the raw amino-acid sequence, 436 residues long: Putative F-box/FBD/LRR-repeat protein At5g44960 (436 aa).

The region spanning 4–50 is the F-box domain; sequence CDYINELPDSLLTQILLDLRTKDSVKTSVSSKRWRNLWLNVPGLDLF. LRR repeat units follow at residues 287-310 and 397-420; these read ISSV…SKLG and SAVL…SYKK. An FBD domain is found at 355–407; that stretch reads EENIDFHEVPQCLISTLEYVHINKLMMMEQSGIKLVNYFIENSAVLKKLTLRF.

The polypeptide is Putative F-box/FBD/LRR-repeat protein At5g44960 (Arabidopsis thaliana (Mouse-ear cress)).